The sequence spans 160 residues: uncharacterized protein (160 aa).

The N-acetyltransferase domain occupies 7–151 (LLINYKTLEE…NPLIWHPDMD (145 aa)).

This is an uncharacterized protein from Bacillus subtilis (strain 168).